Reading from the N-terminus, the 179-residue chain is X-linked lymphocyte-regulated protein 5C (179 aa).

Basic and acidic residues predominate over residues 1 to 11 (MSNKEQKDMKK). A disordered region spans residues 1–75 (MSNKEQKDMK…MQDFKGDDGT (75 aa)). Residues 42 to 53 (GTSGMGSHSSGS) are compositionally biased toward low complexity. Residues 56–75 (QEAREPVQKKMQDFKGDDGT) are compositionally biased toward basic and acidic residues. A coiled-coil region spans residues 146–175 (ITQQQMKILQTAIEDHETKLKNAKDMCDTF).

It belongs to the XLR/SYCP3 family. As to expression, expressed in testis (at protein level). Also expressed in ovary. Not detected in other tissues tested.

It is found in the nucleus. Its subcellular location is the chromosome. In Mus musculus (Mouse), this protein is X-linked lymphocyte-regulated protein 5C.